The primary structure comprises 556 residues: Membrane protein insertase YidC (556 aa).

Residues 7 to 27 (ILLVALAVVAYLMVLQWNQDY) form a helical membrane-spanning segment. 2 disordered regions span residues 35–59 (ETAQ…GNAN) and 126–152 (SSER…PQYS). A compositionally biased stretch (low complexity) spans 36 to 54 (TAQSQPAAPALPDSPSATT). 4 consecutive transmembrane segments (helical) span residues 365–385 (LLGN…LAFF), 435–455 (LGGC…YWVL), 468–488 (FWIT…IMGV), and 513–533 (PIIF…YWVV).

This sequence belongs to the OXA1/ALB3/YidC family. Type 1 subfamily. Interacts with the Sec translocase complex via SecD. Specifically interacts with transmembrane segments of nascent integral membrane proteins during membrane integration.

It is found in the cell inner membrane. In terms of biological role, required for the insertion and/or proper folding and/or complex formation of integral membrane proteins into the membrane. Involved in integration of membrane proteins that insert both dependently and independently of the Sec translocase complex, as well as at least some lipoproteins. Aids folding of multispanning membrane proteins. In Stutzerimonas stutzeri (strain A1501) (Pseudomonas stutzeri), this protein is Membrane protein insertase YidC.